Consider the following 536-residue polypeptide: MEILTFIIYLITFFILFDFYKKNKRYSKSPNKEANGPWSLPIIGGLHLIGDRPNRSFSELSKIYGGIYKIWLAERMLMIVTDPEIIQDIWIKQHDKFVNRPHNITSQIFSLNHKSLVFGDVDEWNKVRPKMTCHFTKIKLNSTKPKQIVNDQLKKMLKIMTTHSLDSKPFNQYVYLNTYSMNIILGLMLSIELPHSNSNDKDGQFSKVLHSIDEIFKSIGTNGPEDIFPTLLPFFKNRISTFTNHLNVIKDFIRSIYKQQIKTFDINIEPRNIMDCLISEYYEDDDQEDEVAKQELIIQLCIDMLVAATDTSASTLEWFMLFMINNPNLQEDLYEEVVNVVGKDCPYVTFDDVPKLALIKACYFEILRIRPVTSLSLPRVSMEDTTTLNDIFIPKDTIIIQNIFGMGNSEKFVSNPTVFNPSRWLEYKKMKDLNQFGNRDDSIDTTNTTTNTTLNGTTSKYYNDLERVSIPFGVGKRRCMAPSMADHNVLIAMANIVLNFTMKSSDPKQMPLSEEEQYAITIKPKYPFKVLFEKRS.

A helical transmembrane segment spans residues 1–21 (MEILTFIIYLITFFILFDFYK). A heme-binding site is contributed by C479.

The protein belongs to the cytochrome P450 family. Heme serves as cofactor.

The protein localises to the membrane. The sequence is that of Probable cytochrome P450 520A1 (cyp520A1) from Dictyostelium discoideum (Social amoeba).